The primary structure comprises 262 residues: Expansin-A7 (262 aa).

A signal peptide spans 1–30 (MGPISSSWSFNKFFSIVFVVFAISGEFVAG). One can recognise an Expansin-like EG45 domain in the interval 55–167 (GGACGYGNLF…RRVPCQRSGG (113 aa)). Intrachain disulfides connect cysteine 58/cysteine 86, cysteine 89/cysteine 162, and cysteine 94/cysteine 100. The 81-residue stretch at 177–257 (YWLLIFVMNV…NWSGGKTYKS (81 aa)) folds into the Expansin-like CBD domain.

It belongs to the expansin family. Expansin A subfamily.

The protein resides in the secreted. The protein localises to the cell wall. Its subcellular location is the membrane. Functionally, causes loosening and extension of plant cell walls by disrupting non-covalent bonding between cellulose microfibrils and matrix glucans. No enzymatic activity has been found. In Arabidopsis thaliana (Mouse-ear cress), this protein is Expansin-A7 (EXPA7).